We begin with the raw amino-acid sequence, 165 residues long: Phosphopantetheine adenylyltransferase (165 aa).

Ser10 is a substrate binding site. Residues 10-11 (SF) and His18 each bind ATP. Substrate-binding residues include Lys42, Leu74, and Arg88. ATP-binding positions include 89–91 (GLR), Glu99, and 124–130 (WFYTSST).

This sequence belongs to the bacterial CoaD family. In terms of assembly, homohexamer. The cofactor is Mg(2+).

Its subcellular location is the cytoplasm. The enzyme catalyses (R)-4'-phosphopantetheine + ATP + H(+) = 3'-dephospho-CoA + diphosphate. The protein operates within cofactor biosynthesis; coenzyme A biosynthesis; CoA from (R)-pantothenate: step 4/5. Its function is as follows. Reversibly transfers an adenylyl group from ATP to 4'-phosphopantetheine, yielding dephospho-CoA (dPCoA) and pyrophosphate. The sequence is that of Phosphopantetheine adenylyltransferase from Syntrophus aciditrophicus (strain SB).